The chain runs to 502 residues: TNF receptor-associated factor family protein DDB_G0268444 (502 aa).

The segment at 28–68 (CSICYESVYKKEIYQCKEIHWFCKTCWAESLFKKKECMICR) adopts an RING-type; degenerate zinc-finger fold. 2 consecutive TRAF-type zinc fingers follow at residues 129–183 (KHLK…SRSL) and 185–243 (NHYK…PKSN). A coiled-coil region spans residues 261 to 295 (IESQSLQIKETNIKYENLLNKINKLEQLETESKCD). In terms of domain architecture, MATH spans 368–489 (KYKNRWSISN…DDSLVIDFSI (122 aa)).

This sequence belongs to the TNF receptor-associated factor family. A subfamily.

Its subcellular location is the cytoplasm. Its function is as follows. Probable adapter protein and signal transducer that links members of the tumor necrosis factor receptor family to different signaling pathways by association with the receptor cytoplasmic domain and kinases. The chain is TNF receptor-associated factor family protein DDB_G0268444 from Dictyostelium discoideum (Social amoeba).